Here is a 197-residue protein sequence, read N- to C-terminus: 7-methyl-GTP pyrophosphatase (197 aa).

The active-site Proton acceptor is Asp-69.

The protein belongs to the Maf family. YceF subfamily. The cofactor is a divalent metal cation.

It is found in the cytoplasm. The enzyme catalyses N(7)-methyl-GTP + H2O = N(7)-methyl-GMP + diphosphate + H(+). In terms of biological role, nucleoside triphosphate pyrophosphatase that hydrolyzes 7-methyl-GTP (m(7)GTP). May have a dual role in cell division arrest and in preventing the incorporation of modified nucleotides into cellular nucleic acids. The polypeptide is 7-methyl-GTP pyrophosphatase (Pectobacterium atrosepticum (strain SCRI 1043 / ATCC BAA-672) (Erwinia carotovora subsp. atroseptica)).